A 384-amino-acid chain; its full sequence is Heparin lyase I (384 aa).

A signal peptide spans 1 to 21 (MKKQILYLIVLQQLFLCSAYA). Glutamine 22 is subject to Blocked amino end (Gln). The O-linked (Man...) serine glycan is linked to serine 39.

In terms of assembly, monomer. Post-translationally, the N-terminus is blocked.

Its subcellular location is the periplasm. The enzyme catalyses Eliminative cleavage of polysaccharides containing (1-&gt;4)-linked D-glucuronate or L-iduronate residues and (1-&gt;4)-alpha-linked 2-sulfoamino-2-deoxy-6-sulfo-D-glucose residues to give oligosaccharides with terminal 4-deoxy-alpha-D-gluc-4-enuronosyl groups at their non-reducing ends.. Its function is as follows. Degrades heparin and heparan sulfate. Also implicated in the release of heparin-bound growth factors from the extracellular matrix. This chain is Heparin lyase I, found in Pedobacter heparinus (Flavobacterium heparinum).